Here is a 299-residue protein sequence, read N- to C-terminus: Ribosomal protein L11 methyltransferase (299 aa).

Residues T144, G165, D187, and N229 each coordinate S-adenosyl-L-methionine.

Belongs to the methyltransferase superfamily. PrmA family.

It localises to the cytoplasm. It carries out the reaction L-lysyl-[protein] + 3 S-adenosyl-L-methionine = N(6),N(6),N(6)-trimethyl-L-lysyl-[protein] + 3 S-adenosyl-L-homocysteine + 3 H(+). Functionally, methylates ribosomal protein L11. The chain is Ribosomal protein L11 methyltransferase from Teredinibacter turnerae (strain ATCC 39867 / T7901).